Consider the following 605-residue polypeptide: Elongation factor 4 (605 aa).

One can recognise a tr-type G domain in the interval 11–193; sequence KNIRNFSIIA…RLVDVIPAPE (183 aa). Residues 23–28 and 140–143 each bind GTP; these read DHGKST and NKID.

The protein belongs to the TRAFAC class translation factor GTPase superfamily. Classic translation factor GTPase family. LepA subfamily.

The protein resides in the cell inner membrane. It catalyses the reaction GTP + H2O = GDP + phosphate + H(+). Functionally, required for accurate and efficient protein synthesis under certain stress conditions. May act as a fidelity factor of the translation reaction, by catalyzing a one-codon backward translocation of tRNAs on improperly translocated ribosomes. Back-translocation proceeds from a post-translocation (POST) complex to a pre-translocation (PRE) complex, thus giving elongation factor G a second chance to translocate the tRNAs correctly. Binds to ribosomes in a GTP-dependent manner. The chain is Elongation factor 4 from Acinetobacter baylyi (strain ATCC 33305 / BD413 / ADP1).